The following is a 485-amino-acid chain: Maturase K (485 aa).

It belongs to the intron maturase 2 family. MatK subfamily.

Its subcellular location is the plastid. It localises to the chloroplast. Its function is as follows. Usually encoded in the trnK tRNA gene intron. Probably assists in splicing its own and other chloroplast group II introns. The chain is Maturase K from Malus domestica (Apple).